The sequence spans 125 residues: Succinate dehydrogenase assembly factor 3, mitochondrial (125 aa).

The N-terminal 30 residues, 1-30 (MPGKHVSRVRALYRRILLLHRALPPDLKAL), are a transit peptide targeting the mitochondrion.

The protein belongs to the complex I LYR family. SDHAF3 subfamily. As to quaternary structure, interacts with Sdhb within an Sdha-Sdhb subcomplex.

It localises to the mitochondrion matrix. In terms of biological role, plays an essential role in the assembly of succinate dehydrogenase (SDH), an enzyme complex (also referred to as respiratory complex II) that is a component of both the tricarboxylic acid (TCA) cycle and the mitochondrial electron transport chain, and which couples the oxidation of succinate to fumarate with the reduction of ubiquinone (coenzyme Q) to ubiquinol. Promotes maturation of the iron-sulfur protein subunit Sdhb of the SDH catalytic dimer, protecting it from the deleterious effects of oxidants. May act together with SDHAF1. The sequence is that of Succinate dehydrogenase assembly factor 3, mitochondrial from Mus musculus (Mouse).